Reading from the N-terminus, the 381-residue chain is uncharacterized protein (381 aa).

Disordered stretches follow at residues 1-20 (MPYY…FDPT) and 36-381 (IPPS…EDDE). Positions 9–18 (NDVDDFDEFD) are enriched in acidic residues. 2 stretches are compositionally biased toward basic and acidic residues: residues 166 to 175 (TEVEYGRRPE) and 186 to 237 (SESE…EGYR). 3 positions are modified to phosphoserine: serine 339, serine 346, and serine 357. Basic residues predominate over residues 364-374 (KKHRHKHHHQK).

This is an uncharacterized protein from Arabidopsis thaliana (Mouse-ear cress).